A 56-amino-acid chain; its full sequence is Small integral membrane protein 39 (56 aa).

A helical membrane pass occupies residues 33–53 (VVVSAVLALLVLINVVLIFLL).

The protein resides in the membrane. This chain is Small integral membrane protein 39, found in Homo sapiens (Human).